We begin with the raw amino-acid sequence, 255 residues long: Ly6/PLAUR domain-containing protein 8 (255 aa).

An N-terminal signal peptide occupies residues 1-20 (MRGVFIAGVIAAFAITVVDS). N-linked (GlcNAc...) asparagine glycosylation is found at Asn22, Asn30, Asn53, Asn72, Asn76, Asn105, Asn115, Asn128, Asn154, Asn169, Asn179, Asn200, and Asn210. Residues 121-170 (CMSCYGHNKTLCEEKPQKCYEGEQCVFIIAEMVNGSGRVELKGCSDISNS) form the UPAR/Ly6 domain. The GPI-anchor amidated serine moiety is linked to residue Ser233. A propeptide spans 234–255 (MGTKASFTSSIFGSLLLLKLLF) (removed in mature form).

Belongs to the CNF-like-inhibitor family. Highly N-glycosylated. Not O-glycosylated. Post-translationally, GPI-anchored. The GPI-anchor is cleaved, leading to secretion into the colonic lumen. As to expression, specifically present in enterocytes located at the uppermost epithelial layer of the colon (at protein level). Exclusively expressed in the large intestine: specifically expressed on the apical surface of epithelial cells located at the uppermost layer of the colonic gland.

It is found in the cell membrane. It localises to the secreted. Functionally, secreted protein specifically required to prevent invasion of Gram-negative bacteria in the inner mucus layer of the colon epithelium, a portion of the large intestine which is free of commensal microbiota. Prevents invasion of flagellated microbiota by binding to the flagellum of bacteria, such as P.mirabilis, thereby inhibiting bacterial motility in the intestinal lumen. Segregation of intestinal bacteria and epithelial cells in the colon is required to preserve intestinal homeostasis. In Mus musculus (Mouse), this protein is Ly6/PLAUR domain-containing protein 8.